A 47-amino-acid polypeptide reads, in one-letter code: Large ribosomal subunit protein bL33C (47 aa).

It belongs to the bacterial ribosomal protein bL33 family.

This Staphylococcus aureus (strain MRSA252) protein is Large ribosomal subunit protein bL33C.